The primary structure comprises 679 residues: Protein CASP (679 aa).

Over 1 to 614 (MDTSVYSHAL…VILQNKMTRM (614 aa)) the chain is Cytoplasmic. Coiled-coil stretches lie at residues 14–90 (AKAD…EKVL) and 178–341 (RNWK…NYSD). Ser364 is modified (phosphoserine). A coiled-coil region spans residues 385–444 (ANKKLQATLAEYRSKSTAQEEERNELKKSVDQLKQQIATLKEANEKLETDLEKVENVSPH). Phosphoserine is present on residues Ser450 and Ser453. Residues 492-540 (IVTKQRDRFRSRNMDLEKQLRQGNSEKGKLKLEISKLKGDNTKLYERIR) are a coiled coil. Phosphoserine is present on Ser555. A helical; Anchor for type IV membrane protein membrane pass occupies residues 615 to 635 (VFLFYCIGLHGLVFMMSMYVI). Residues 636–679 (NISGYMTPEVGIVQSAKSSSNLNGGLGGAEKVAAGVGSVHGINR) lie on the Lumenal side of the membrane.

Belongs to the CASP family.

Its subcellular location is the golgi apparatus membrane. Functionally, may be involved in intra-Golgi transport. This Saccharomyces cerevisiae (strain ATCC 204508 / S288c) (Baker's yeast) protein is Protein CASP (COY1).